We begin with the raw amino-acid sequence, 459 residues long: Cysteine--tRNA ligase (459 aa).

Cysteine 31 contacts Zn(2+). Positions 33–43 match the 'HIGH' region motif; the sequence is PTVYYNPHIGN. Cysteine 216, histidine 241, and glutamate 245 together coordinate Zn(2+). The 'KMSKS' region signature appears at 274 to 278; sequence KMSKS. Residue lysine 277 participates in ATP binding.

It belongs to the class-I aminoacyl-tRNA synthetase family. In terms of assembly, monomer. Requires Zn(2+) as cofactor.

It is found in the cytoplasm. The enzyme catalyses tRNA(Cys) + L-cysteine + ATP = L-cysteinyl-tRNA(Cys) + AMP + diphosphate. The sequence is that of Cysteine--tRNA ligase from Rickettsia africae (strain ESF-5).